The following is a 61-amino-acid chain: Hepcidin (61 aa).

The tract at residues 1–24 is disordered; it reads LQVLTEEVGSIDSPVGEHQQPGGE. A propeptide spanning residues 1–34 is cleaved from the precursor; that stretch reads LQVLTEEVGSIDSPVGEHQQPGGESMRLPEHFRF. 4 cysteine pairs are disulfide-bonded: cysteine 43–cysteine 59, cysteine 46–cysteine 49, cysteine 47–residue 55, and cysteine 50–cysteine 58.

This sequence belongs to the hepcidin family.

Its subcellular location is the secreted. Seems to act as a signaling molecule involved in the maintenance of iron homeostasis. Seems to be required in conjunction with HFE to regulate both intestinal iron absorption and iron storage in macrophages. May also have antimicrobial activity. The polypeptide is Hepcidin (hamp) (Oncorhynchus mykiss (Rainbow trout)).